The primary structure comprises 410 residues: Translation initiation factor 2 subunit gamma (410 aa).

One can recognise a tr-type G domain in the interval 6-203 (QSEVNIGMVG…AIQEFIPTPE (198 aa)). A G1 region spans residues 15-22 (GHVDHGKT). Positions 18, 22, 43, and 45 each coordinate Mg(2+). 18–23 (DHGKTS) contributes to the GTP binding site. The segment at 43–47 (GISIR) is G2. 4 residues coordinate Zn(2+): C58, C61, C73, and C76. Residues 90–93 (DAPG) are G3. GTP is bound by residues 146–149 (NKID) and 181–183 (SAH). Residues 146–149 (NKID) are G4. The tract at residues 181-183 (SAH) is G5.

It belongs to the TRAFAC class translation factor GTPase superfamily. Classic translation factor GTPase family. EIF2G subfamily. As to quaternary structure, heterotrimer composed of an alpha, a beta and a gamma chain. Requires Mg(2+) as cofactor.

It catalyses the reaction GTP + H2O = GDP + phosphate + H(+). Its function is as follows. eIF-2 functions in the early steps of protein synthesis by forming a ternary complex with GTP and initiator tRNA. This is Translation initiation factor 2 subunit gamma from Methanococcus maripaludis (strain C7 / ATCC BAA-1331).